The chain runs to 533 residues: GDP-fucose protein O-fucosyltransferase 4 (533 aa).

Topologically, residues 1-20 (MSAGCTQLVWGGRLHWGASH) are cytoplasmic. A helical; Signal-anchor for type II membrane protein transmembrane segment spans residues 21-37 (LLSCLLALCALWVLAAA). The Lumenal portion of the chain corresponds to 38–533 (EPTEGGSANV…ETYIKRSMNH (496 aa)). N-linked (GlcNAc...) asparagine glycans are attached at residues Asn148, Asn206, and Asn358. Cysteines 429 and 432 form a disulfide. Asn511 is a glycosylation site (N-linked (GlcNAc...) asparagine).

Belongs to the glycosyltransferase 10 family.

It localises to the endoplasmic reticulum membrane. It catalyses the reaction L-threonyl-[protein] + GDP-beta-L-fucose = 3-O-(alpha-L-fucosyl)-L-threonyl-[protein] + GDP + H(+). The enzyme catalyses L-seryl-[protein] + GDP-beta-L-fucose = 3-O-(alpha-L-fucosyl)-L-seryl-[protein] + GDP + H(+). Its pathway is protein modification; protein glycosylation. Its function is as follows. Protein O-fucosyltransferase that specifically catalyzes O-fucosylation of serine or threonine residues in EMI domains of target proteins. Attaches fucose through an O-glycosidic linkage. O-fucosylation of EMI domain-containing proteins may be required for facilitating protein folding and secretion. The sequence is that of GDP-fucose protein O-fucosyltransferase 4 (fut11) from Xenopus tropicalis (Western clawed frog).